The sequence spans 154 residues: Large ribosomal subunit protein eL24 (154 aa).

A disordered region spans residues 92–154 (AKRNQKPEVR…AAAPRVGGKR (63 aa)). Residues 96–122 (QKPEVRKAQREQAVKAAKEKKKADQVG) show a composition bias toward basic and acidic residues. Residues 129-154 (KARATAPKTKAPKTVKAAAPRVGGKR) are compositionally biased toward low complexity.

The protein belongs to the eukaryotic ribosomal protein eL24 family.

The sequence is that of Large ribosomal subunit protein eL24 (RPL24) from Branchiostoma belcheri (Amphioxus).